The chain runs to 221 residues: Phosphatidylserine decarboxylase proenzyme (221 aa).

Ser-189 acts as the Schiff-base intermediate with substrate; via pyruvic acid in catalysis. Ser-189 carries the post-translational modification Pyruvic acid (Ser); by autocatalysis.

This sequence belongs to the phosphatidylserine decarboxylase family. PSD-A subfamily. In terms of assembly, heterodimer of a large membrane-associated beta subunit and a small pyruvoyl-containing alpha subunit. Pyruvate serves as cofactor. In terms of processing, is synthesized initially as an inactive proenzyme. Formation of the active enzyme involves a self-maturation process in which the active site pyruvoyl group is generated from an internal serine residue via an autocatalytic post-translational modification. Two non-identical subunits are generated from the proenzyme in this reaction, and the pyruvate is formed at the N-terminus of the alpha chain, which is derived from the carboxyl end of the proenzyme. The post-translation cleavage follows an unusual pathway, termed non-hydrolytic serinolysis, in which the side chain hydroxyl group of the serine supplies its oxygen atom to form the C-terminus of the beta chain, while the remainder of the serine residue undergoes an oxidative deamination to produce ammonia and the pyruvoyl prosthetic group on the alpha chain.

Its subcellular location is the cell membrane. The enzyme catalyses a 1,2-diacyl-sn-glycero-3-phospho-L-serine + H(+) = a 1,2-diacyl-sn-glycero-3-phosphoethanolamine + CO2. Its pathway is phospholipid metabolism; phosphatidylethanolamine biosynthesis; phosphatidylethanolamine from CDP-diacylglycerol: step 2/2. Functionally, catalyzes the formation of phosphatidylethanolamine (PtdEtn) from phosphatidylserine (PtdSer). The chain is Phosphatidylserine decarboxylase proenzyme from Porphyromonas gingivalis (strain ATCC 33277 / DSM 20709 / CIP 103683 / JCM 12257 / NCTC 11834 / 2561).